Consider the following 237-residue polypeptide: Uridylate kinase (237 aa).

Residue K11–G14 participates in ATP binding. G53 is a binding site for UMP. 2 residues coordinate ATP: G54 and R58. Residues D73 and T134–T141 each bind UMP. T161, Y167, and D170 together coordinate ATP.

This sequence belongs to the UMP kinase family. As to quaternary structure, homohexamer.

Its subcellular location is the cytoplasm. The enzyme catalyses UMP + ATP = UDP + ADP. Its pathway is pyrimidine metabolism; CTP biosynthesis via de novo pathway; UDP from UMP (UMPK route): step 1/1. Its activity is regulated as follows. Inhibited by UTP. Catalyzes the reversible phosphorylation of UMP to UDP. The polypeptide is Uridylate kinase (Burkholderia cenocepacia (strain HI2424)).